A 218-amino-acid polypeptide reads, in one-letter code: GTP cyclohydrolase 1 (218 aa).

Zn(2+) is bound by residues C111, H114, and C182.

The protein belongs to the GTP cyclohydrolase I family. As to quaternary structure, toroid-shaped homodecamer, composed of two pentamers of five dimers.

The catalysed reaction is GTP + H2O = 7,8-dihydroneopterin 3'-triphosphate + formate + H(+). It participates in cofactor biosynthesis; 7,8-dihydroneopterin triphosphate biosynthesis; 7,8-dihydroneopterin triphosphate from GTP: step 1/1. The polypeptide is GTP cyclohydrolase 1 (Buchnera aphidicola subsp. Schizaphis graminum (strain Sg)).